Consider the following 326-residue polypeptide: DNA-directed RNA polymerase subunit alpha (326 aa).

An alpha N-terminal domain (alpha-NTD) region spans residues methionine 1 to glutamate 231. Residues valine 247 to lysine 326 form an alpha C-terminal domain (alpha-CTD) region.

Belongs to the RNA polymerase alpha chain family. Homodimer. The RNAP catalytic core consists of 2 alpha, 1 beta, 1 beta' and 1 omega subunit. When a sigma factor is associated with the core the holoenzyme is formed, which can initiate transcription.

The catalysed reaction is RNA(n) + a ribonucleoside 5'-triphosphate = RNA(n+1) + diphosphate. Functionally, DNA-dependent RNA polymerase catalyzes the transcription of DNA into RNA using the four ribonucleoside triphosphates as substrates. This Polynucleobacter necessarius subsp. necessarius (strain STIR1) protein is DNA-directed RNA polymerase subunit alpha.